Reading from the N-terminus, the 560-residue chain is SWI/SNF complex subunit SWI3A homolog (560 aa).

The span at 1-13 shows a compositional bias: low complexity; the sequence is MSPPVAGAASSGD. A disordered region spans residues 1–22; sequence MSPPVAGAASSGDGPPGRPPRE. Residues 24 to 127 form the SWIRM domain; it reads YTIPASSGWF…FSASPSRPEA (104 aa). The SANT domain maps to 242–293; that stretch reads HSSSAWTDAETLLLLEGVLKHGDDWDLIAQHVRTKNKSECIARLIQLPFGEH. The span at 311–330 shows a compositional bias: polar residues; that stretch reads TTDGKVNKSTVKESSSQPTE. Disordered stretches follow at residues 311–352 and 414–445; these read TTDG…EEHP and QTRA…PDKK. Over residues 331 to 342 the composition is skewed to acidic residues; it reads TVDDMQIDGNED. Composition is skewed to basic and acidic residues over residues 343-352 and 424-445; these read GADKSVEEHP and RQSD…PDKK.

In terms of assembly, interacts with LFR.

It localises to the nucleus. Component of a multiprotein complex equivalent of the SWI/SNF complex, an ATP-dependent chromatin-remodeling complex, which is required for the positive and negative regulation of gene expression of a large number of genes. It changes chromatin structure by altering DNA-histone contacts within a nucleosome, leading eventually to a change in nucleosome position, thus facilitating or repressing binding of gene-specific transcription factors. This chain is SWI/SNF complex subunit SWI3A homolog, found in Oryza sativa subsp. japonica (Rice).